We begin with the raw amino-acid sequence, 305 residues long: GS homeobox 2 (305 aa).

2 disordered regions span residues 115 to 151 (DAQFCPRVSHAHHHHHPPQHHHHHHQPQQPGSAAAAA) and 259 to 305 (KKEG…ISPL). A compositionally biased stretch (basic residues) spans 123–140 (SHAHHHHHPPQHHHHHHQ). The span at 141-151 (PQQPGSAAAAA) shows a compositional bias: low complexity. Positions 203-262 (GKRMRTAFTSTQLLELEREFSSNMYLSRLRRIEIATYLNLSEKQVKIWFQNRRVKHKKEG) form a DNA-binding region, homeobox.

Belongs to the Antp homeobox family.

The protein localises to the nucleus. Its function is as follows. Transcription factor that binds 5'-CNAATTAG-3' DNA sequence and regulates the expression of numerous genes including genes important for brain development. During telencephalic development, causes ventralization of pallial progenitors and, depending on the developmental stage, specifies different neuronal fates. At early stages, necessary and sufficient to correctly specify the ventral lateral ganglionic eminence (LGE) and its major derivatives, the striatal projection neurons. At later stages, may specify LGE progenitors toward dorsal LGE fates, including olfactory bulb interneurons. The polypeptide is GS homeobox 2 (Gsx2) (Mus musculus (Mouse)).